The primary structure comprises 139 residues: Insulin-like growth factor (139 aa).

The first 38 residues, 1–38 (YIRRVRQGSIYSLLVESQQWCKLTLTLLLLLALLTRCT), serve as a signal peptide directing secretion. The tract at residues 39–67 (LSETLCGSELVDTLQFVCDDRGFFFVPQH) is b. Residues 68–82 (VPPRRGAHRRSRARK) are c. Residues 83–103 (GIVEECCFKGCSLRLLEMYCA) form an a region. The interval 104–113 (RPSKAERDVA) is d. The interval 108 to 139 (AERDVARPRQRPHRASQHSRRGSQSRGRGRSR) is disordered. The segment at 114 to 139 (RPRQRPHRASQHSRRGSQSRGRGRSR) is e. The span at 115–139 (PRQRPHRASQHSRRGSQSRGRGRSR) shows a compositional bias: basic residues.

Belongs to the insulin family.

It is found in the secreted. Its function is as follows. The insulin-like growth factors, isolated from plasma, are structurally and functionally related to insulin but have a much higher growth-promoting activity. The polypeptide is Insulin-like growth factor (Myxine glutinosa (Atlantic hagfish)).